Reading from the N-terminus, the 61-residue chain is Conotoxin TeAr154 (61 aa).

Residues 1-19 form the signal peptide; it reads MHCLPVFVILLLLTASGLS. Residues 20–47 constitute a propeptide that is removed on maturation; it reads VDARPKTEDDVPLSSFRDNTKSTLQRLL. E57 carries the 4-carboxyglutamate modification.

Contains 2 disulfide bonds that can be either 'C1-C3, C2-C4' or 'C1-C4, C2-C3', since these disulfide connectivities have been observed for conotoxins with cysteine framework V (for examples, see AC P0DQQ7 and AC P81755). Post-translationally, contains 2 disulfide bonds. In terms of tissue distribution, expressed by the venom duct.

It localises to the secreted. This Conus textile (Cloth-of-gold cone) protein is Conotoxin TeAr154.